Reading from the N-terminus, the 195-residue chain is Magnetosome membrane protein 22 (195 aa).

Residues 1–28 (MAAQTAASEAPAPAAAPADSPTTAGPTP) show a composition bias toward low complexity. Residues 1–31 (MAAQTAASEAPAPAAAPADSPTTAGPTPDSV) form a disordered region. The next 3 membrane-spanning stretches (helical) occupy residues 45–65 (VLAA…AAVV), 90–110 (SVIA…AVAV), and 115–135 (LIPG…AGAT).

The protein resides in the magnetosome membrane. This is Magnetosome membrane protein 22 from Magnetospirillum gryphiswaldense (strain DSM 6361 / JCM 21280 / NBRC 15271 / MSR-1).